We begin with the raw amino-acid sequence, 210 residues long: Probable GTP-binding protein EngB (210 aa).

Residues 25–199 (TGIEVAFAGR…RQKLDTWFSE (175 aa)) enclose the EngB-type G domain. GTP contacts are provided by residues 33–40 (GRSNAGKS), 60–64 (GRTQL), 78–81 (DLPG), 145–148 (TKAD), and 178–180 (FSS). Residues Ser-40 and Thr-62 each contribute to the Mg(2+) site.

Belongs to the TRAFAC class TrmE-Era-EngA-EngB-Septin-like GTPase superfamily. EngB GTPase family. It depends on Mg(2+) as a cofactor.

Functionally, necessary for normal cell division and for the maintenance of normal septation. The sequence is that of Probable GTP-binding protein EngB from Shigella boydii serotype 4 (strain Sb227).